A 918-amino-acid chain; its full sequence is Melanoma-associated antigen E1 (918 aa).

Disordered regions lie at residues 1 to 140 (MSLV…GSKA), 154 to 227 (EQRH…SNGL), and 367 to 388 (SQMS…ANNP). The span at 8 to 23 (SRRRRGGRANARRNNG) shows a compositional bias: basic residues. Composition is skewed to polar residues over residues 70-96 (VPPT…SEMP), 113-126 (GLNT…SEGP), and 213-227 (EDPS…SNGL). 2 MAGE domains span residues 459 to 658 (MEQN…YNEA) and 706 to 897 (LESK…YREA). The interaction with DTNA stretch occupies residues 704 to 918 (SRLESKARKL…RRPLIVRNLR (215 aa)).

Interacts with DTNA. Interacts with TRIM28. Expressed in cell bodies and dendrites of hippocampal and Purkinje neurons. Also expressed in peripheral nerve, where it localizes to the perineurium and myelin (at protein level). Predominantly expressed in brain and at low levels in the heart, liver, kidney, spleen, testis, lung, thymus, placenta and skeletal muscle.

It localises to the cytoplasm. The protein localises to the perinuclear region. Its subcellular location is the nucleus. It is found in the cell membrane. May enhance ubiquitin ligase activity of RING-type zinc finger-containing E3 ubiquitin-protein ligases. Proposed to act through recruitment and/or stabilization of the Ubl-conjugating enzyme (E2) at the E3:substrate complex. The sequence is that of Melanoma-associated antigen E1 (Magee1) from Mus musculus (Mouse).